The primary structure comprises 432 residues: N-acylneuraminate cytidylyltransferase (432 aa).

Met-1 bears the N-acetylmethionine mark. The tract at residues Met-1–Glu-38 is disordered. The BC1 motif motif lies at Pro-15 to Arg-31. Residues Arg-18–Arg-29 show a composition bias toward basic residues. Omega-N-methylarginine occurs at positions 35 and 50. Substrate-binding residues include Arg-50, Asn-60, Arg-109, Ser-118, Ser-120, and Gln-141. The short motif at Lys-198–Asp-204 is the BC2 motif element. Arg-199 is an active-site residue. Residues Lys-267 to Lys-274 carry the BC3 motif motif.

Belongs to the CMP-NeuNAc synthase family. In terms of assembly, homotetramer; the active enzyme is formed by a dimer of dimers. Liver.

It localises to the nucleus. The catalysed reaction is an N-acylneuraminate + CTP = a CMP-N-acyl-beta-neuraminate + diphosphate. The protein operates within amino-sugar metabolism; N-acetylneuraminate metabolism. In terms of biological role, catalyzes the activation of N-acetylneuraminic acid (NeuNAc) to cytidine 5'-monophosphate N-acetylneuraminic acid (CMP-NeuNAc), a substrate required for the addition of sialic acid. Has some activity toward NeuNAc, N-glycolylneuraminic acid (Neu5Gc) or 2-keto-3-deoxy-D-glycero-D-galacto-nononic acid (KDN). This chain is N-acylneuraminate cytidylyltransferase (Cmas), found in Rattus norvegicus (Rat).